Here is a 130-residue protein sequence, read N- to C-terminus: Metastasis-suppressor KiSS-1 (130 aa).

Residues 1–19 form the signal peptide; it reads MISLASWQLLLLLCVASFG. The tract at residues 52-91 is disordered; the sequence is RYAESKPGAAGLRARRTSPCPPVENPTGHQRPPCATRSRL. A disulfide bond links C71 and C85. Residue Y110 is modified to Phosphotyrosine. An essential for receptor binding and receptor activation region spans residues 110–119; sequence YNWNSFGLRY. Y119 bears the Tyrosine amide mark.

Belongs to the KISS1 family. In terms of tissue distribution, highest levels in the cecum and colon. Moderate levels present in the liver, spleen, kidney, ovary, uterus and small intestine. Low levels in the stomach, pancreas and placenta. Expressed only moderately in the placenta. Persistent expression is detected in hypothalamus throughout postnatal development, with maximum expression levels at puberty in both male and female. Hypothalamic expression is sensitive to neonatal imprinting by estrogen. Expression is higher in the hypothalamus than in the brainstem and spinal cord. In the brain, metastin-like immunoreactivity is found mainly in three groups of cells: dorsomedial hypothalamic nucleus, nucleus of the solitary tract, and caudal ventrolateral medulla.

It is found in the secreted. In terms of biological role, metastasis suppressor protein. May regulate events downstream of cell-matrix adhesion, perhaps involving cytoskeletal reorganization. Generates a C-terminally amidated peptide, metastin which functions as the endogenous ligand of the G-protein coupled receptor GPR54. The receptor is also essential for normal gonadotropin-released hormone physiology and for puberty. The hypothalamic KiSS1/GPR54 system is a pivotal factor in central regulation of the gonadotropic axis at puberty and in adulthood. Intracerebroventricular administration induces an increase in serum LH and FSH levels in prepubertal male and female as well as in adult animals. In Rattus norvegicus (Rat), this protein is Metastasis-suppressor KiSS-1 (Kiss1).